Consider the following 651-residue polypeptide: Coiled-coil domain-containing protein 81 (651 aa).

The interval 194-314 (LSSRESFGKR…PKTSPAPACQ (121 aa)) is disordered. Phosphoserine is present on Ser-206. 2 stretches are compositionally biased toward basic and acidic residues: residues 212 to 222 (RIEHKETENKP) and 232 to 250 (GENRPRKSKLKDQSDKEEG). Residues 265 to 275 (SISPAKVTSGS) show a composition bias toward polar residues. A phosphoserine mark is found at Ser-273, Ser-275, Ser-294, and Ser-416. Coiled coils occupy residues 428-465 (SQSLLKQMESKREKEIKQRQNRELMDRLEQVQLTEELA) and 539-566 (KRNTILNQLVDQRRDLQMLQRTKREHLA).

The protein resides in the cytoplasm. The protein localises to the cytoskeleton. It localises to the microtubule organizing center. Its subcellular location is the centrosome. This Rattus norvegicus (Rat) protein is Coiled-coil domain-containing protein 81 (Ccdc81).